A 130-amino-acid polypeptide reads, in one-letter code: L-ectoine synthase (130 aa).

This sequence belongs to the ectoine synthase family.

The catalysed reaction is (2S)-4-acetamido-2-aminobutanoate = L-ectoine + H2O. It functions in the pathway amine and polyamine biosynthesis; ectoine biosynthesis; L-ectoine from L-aspartate 4-semialdehyde: step 3/3. Its function is as follows. Catalyzes the circularization of gamma-N-acetyl-alpha,gamma-diaminobutyric acid (ADABA) to ectoine (1,4,5,6-tetrahydro-2-methyl-4-pyrimidine carboxylic acid), which is an excellent osmoprotectant. This Mycobacteroides abscessus (strain ATCC 19977 / DSM 44196 / CCUG 20993 / CIP 104536 / JCM 13569 / NCTC 13031 / TMC 1543 / L948) (Mycobacterium abscessus) protein is L-ectoine synthase.